A 373-amino-acid chain; its full sequence is SH3 domain-binding protein 5-like (373 aa).

Residues 1-36 (MEGKEGPPCEVRLPTPGAEREGPVHPELGAFGESAS) are disordered. 2 coiled-coil regions span residues 35-98 (ASDA…ESAR) and 170-258 (WQEM…KLRY). 2 disordered regions span residues 274 to 308 (ARRT…PADT) and 332 to 373 (DLTD…SVSL). Residues 332 to 360 (DLTDVTSLDGRETGAVESGGSRERGEDRG) are compositionally biased toward basic and acidic residues.

Belongs to the SH3BP5 family.

Its function is as follows. Functions as a guanine nucleotide exchange factor (GEF) for rab11a. The sequence is that of SH3 domain-binding protein 5-like (sh3bp5l) from Xenopus laevis (African clawed frog).